We begin with the raw amino-acid sequence, 805 residues long: Transducer protein BasT (805 aa).

Helical transmembrane passes span 25–45 (FNVL…YIHL) and 296–316 (NLAG…LTVG). 2 HAMP domains span residues 317 to 370 (RRTS…TAAS) and 437 to 490 (ERLE…ATLA). The region spanning 509-745 (SAAEIRSASD…EVVTMIDEVT (237 aa)) is the Methyl-accepting transducer domain. Residues 513 to 532 (IRSASDQVSESVQDISADAD) form a disordered region. A compositionally biased stretch (polar residues) spans 516–526 (ASDQVSESVQD). Glutamate methyl ester (Glu) is present on residues Glu554, Glu736, and Glu763. The interval 752-779 (ATESQQVSAAAEEQAASVSEVAGRADDL) is disordered. Over residues 754–773 (ESQQVSAAAEEQAASVSEVA) the composition is skewed to low complexity.

It belongs to the methyl-accepting chemotaxis (MCP) protein family. Interacts with CheA, CheY, CheW1 and CheW2. Post-translationally, methylated by CheR.

The protein localises to the cell membrane. Its function is as follows. Mediates chemotaxis towards five attractant amino acids (leucine, isoleucine, valine, methionine and cysteine). Probably transduces the signal from the substrate-binding protein BasB to the histidine kinase CheA. The protein is Transducer protein BasT (basT) of Halobacterium salinarum (strain ATCC 29341 / DSM 671 / R1).